We begin with the raw amino-acid sequence, 237 residues long: Cuticlin-like protein 19 (237 aa).

The first 20 residues, 1 to 20 (MVEYNRIFCVLVIFSTTIKC), serve as a signal peptide directing secretion.

Interacts with vps-51 and vps-52. In terms of tissue distribution, expression detected in motor neurons.

Its subcellular location is the golgi apparatus. The protein resides in the trans-Golgi network. The polypeptide is Cuticlin-like protein 19 (cutl-19) (Caenorhabditis elegans).